We begin with the raw amino-acid sequence, 296 residues long: tRNA uridine(34) hydroxylase (296 aa).

In terms of domain architecture, Rhodanese spans 130 to 225 (RGEDVVFFDG…YGEAYGDRGL (96 aa)). Cysteine 185 functions as the Cysteine persulfide intermediate in the catalytic mechanism.

It belongs to the TrhO family.

The enzyme catalyses uridine(34) in tRNA + AH2 + O2 = 5-hydroxyuridine(34) in tRNA + A + H2O. In terms of biological role, catalyzes oxygen-dependent 5-hydroxyuridine (ho5U) modification at position 34 in tRNAs. The sequence is that of tRNA uridine(34) hydroxylase from Kocuria rhizophila (strain ATCC 9341 / DSM 348 / NBRC 103217 / DC2201).